The sequence spans 340 residues: MSEKNAYAKSGVDVEAGYEVVERIKKHVARTERAGVMGVLGGFGGMFDLSKTGVKEPVLVSGTDGVGTKLMLAIKYDKHDTIGQDCVAMCVNDIIAAGAEPLYFLDYVATGKNNPVKLEEVVSGVAEGCVQAGAALIGGETAEMPGMYGEDDYDLAGFAVGVAEKSQIIDGSKVKEGDILLGLASSGIHSNGYSLVRRVFADYTGKELLPELEGKQLKDVLLEPTRIYVKAALPLIKEELVNGIGHITGGGFIENIPRMFADDLAAEIDEDKVPVLPIFKALEKYGDIKHEEMFEIFNMGVGLMLAVSPENVNRVKELLDEPVYEIGRIIKKADDSVVIK.

Belongs to the AIR synthase family.

Its subcellular location is the cytoplasm. The catalysed reaction is 2-formamido-N(1)-(5-O-phospho-beta-D-ribosyl)acetamidine + ATP = 5-amino-1-(5-phospho-beta-D-ribosyl)imidazole + ADP + phosphate + H(+). Its pathway is purine metabolism; IMP biosynthesis via de novo pathway; 5-amino-1-(5-phospho-D-ribosyl)imidazole from N(2)-formyl-N(1)-(5-phospho-D-ribosyl)glycinamide: step 2/2. The protein is Phosphoribosylformylglycinamidine cyclo-ligase of Streptococcus pyogenes serotype M18 (strain MGAS8232).